Here is a 145-residue protein sequence, read N- to C-terminus: Bacilliredoxin Acid345_1880 (145 aa).

Belongs to the bacilliredoxin family.

This is Bacilliredoxin Acid345_1880 from Koribacter versatilis (strain Ellin345).